The following is a 326-amino-acid chain: Polycomb complex protein BMI-1 (326 aa).

The RING-type zinc finger occupies 18–57; it reads CVLCGGYFIDATTIIECLHSFCKTCIVRYLETSKYCPICD. The Nuclear localization signal motif lies at 81–95; it reads KLVPGLFKNEMKRRR. The interaction with PHC2 stretch occupies residues 162–182; the sequence is RYLRCPAAMTVMHLRKFLRSK. Positions 164 to 228 are interaction with E4F1; the sequence is LRCPAAMTVM…GPLPLKYRVR (65 aa). Residues 236 to 326 are disordered; sequence ISHQRDGLTN…VNGSSATSSG (91 aa). A compositionally biased stretch (low complexity) spans 266-278; it reads PSTSSCLPSPSTP. Residues 279–309 are compositionally biased toward polar residues; the sequence is VQSPHPQFPHISSTMNGTSNSPSGNHQSSFA. A compositionally biased stretch (low complexity) spans 315–326; that stretch reads SSVNGSSATSSG.

Component of a PRC1-like complex. Identified in a PRC1-like HPRC-H complex with CBX2, CBX4, CBX8, PHC1, PHC2, PHC3 RING1 and RNF2. Interacts with RNF2/RING2. Interacts with RING1. Part of a complex that contains RNF2, UB2D3 and BMI1, where RNF2 and BMI1 form a tight heterodimer, and UB2D3 interacts only with RNF2. The complex composed of RNF2, UB2D3 and BMI1 binds nucleosomes, and has activity only with nucleosomal histone H2A. Interacts with CBX7 and CBX8. Interacts with SPOP. Part of a complex consisting of BMI1, CUL3 and SPOP. Interacts with E4F1. Interacts with PHC2. Interacts with zinc finger protein ZNF277. May be part of a complex including at least ZNF277, BMI1 and RNF2/RING2. In terms of processing, monoubiquitinated. May be polyubiquitinated; which does not lead to proteasomal degradation.

It localises to the nucleus. The protein localises to the cytoplasm. Functionally, component of a Polycomb group (PcG) multiprotein PRC1-like complex, a complex class required to maintain the transcriptionally repressive state of many genes, including Hox genes, throughout development. PcG PRC1 complex acts via chromatin remodeling and modification of histones; it mediates monoubiquitination of histone H2A 'Lys-119', rendering chromatin heritably changed in its expressibility. The complex composed of RNF2, UB2D3 and BMI1 binds nucleosomes, and has activity only with nucleosomal histone H2A. In the PRC1-like complex, regulates the E3 ubiquitin-protein ligase activity of RNF2/RING2. This is Polycomb complex protein BMI-1 (BMI1) from Homo sapiens (Human).